We begin with the raw amino-acid sequence, 499 residues long: Bifunctional purine biosynthesis protein PurH (499 aa).

Positions 1–144 (MIKRALISVF…KNFKDVVVLT (144 aa)) constitute an MGS-like domain.

This sequence belongs to the PurH family.

It carries out the reaction (6R)-10-formyltetrahydrofolate + 5-amino-1-(5-phospho-beta-D-ribosyl)imidazole-4-carboxamide = 5-formamido-1-(5-phospho-D-ribosyl)imidazole-4-carboxamide + (6S)-5,6,7,8-tetrahydrofolate. The enzyme catalyses IMP + H2O = 5-formamido-1-(5-phospho-D-ribosyl)imidazole-4-carboxamide. Its pathway is purine metabolism; IMP biosynthesis via de novo pathway; 5-formamido-1-(5-phospho-D-ribosyl)imidazole-4-carboxamide from 5-amino-1-(5-phospho-D-ribosyl)imidazole-4-carboxamide (10-formyl THF route): step 1/1. It participates in purine metabolism; IMP biosynthesis via de novo pathway; IMP from 5-formamido-1-(5-phospho-D-ribosyl)imidazole-4-carboxamide: step 1/1. The polypeptide is Bifunctional purine biosynthesis protein PurH (Clostridium botulinum (strain 657 / Type Ba4)).